Reading from the N-terminus, the 622-residue chain is Apical membrane antigen 1 (622 aa).

A signal peptide spans 1 to 24 (MRKLYCVLLLSAFEFTYMINFGRG). Residues 25-546 (QNYWEHPYQK…EHKPTYDKMK (522 aa)) are Extracellular-facing. Disulfide bonds link Cys149–Cys302, Cys217–Cys247, Cys263–Cys275, Cys320–Cys418, and Cys337–Cys409. Residue Asn162 is glycosylated (N-linked (GlcNAc...) asparagine). N-linked (GlcNAc...) asparagine glycans are attached at residues Asn286, Asn371, Asn421, Asn422, and Asn499. Disulfide bonds link Cys443/Cys502, Cys490/Cys507, and Cys492/Cys509. Residues 547-567 (IIIASSAAVAVLATILMVYLY) traverse the membrane as a helical segment. Residues 568–622 (KRKGNAEKYDKMDEPQHYGKSNSRNDEMLDPEASFWGEEKRASHTTPVLMEKPYY) are Cytoplasmic-facing. The span at 578-594 (KMDEPQHYGKSNSRNDE) shows a compositional bias: basic and acidic residues. The disordered stretch occupies residues 578–607 (KMDEPQHYGKSNSRNDEMLDPEASFWGEEK).

It belongs to the apicomplexan parasites AMA1 family.

The protein localises to the membrane. Its function is as follows. Involved in parasite invasion of erythrocytes. The protein is Apical membrane antigen 1 (AMA-1) of Plasmodium falciparum (isolate FC27 / Papua New Guinea).